The sequence spans 381 residues: Probable tRNA sulfurtransferase (381 aa).

In terms of domain architecture, THUMP spans Leu52–Tyr155. ATP contacts are provided by residues Leu173–Met174, Asn198–Phe199, Arg255, Gly277, and Gln286.

It belongs to the ThiI family.

Its subcellular location is the cytoplasm. It carries out the reaction [ThiI sulfur-carrier protein]-S-sulfanyl-L-cysteine + a uridine in tRNA + 2 reduced [2Fe-2S]-[ferredoxin] + ATP + H(+) = [ThiI sulfur-carrier protein]-L-cysteine + a 4-thiouridine in tRNA + 2 oxidized [2Fe-2S]-[ferredoxin] + AMP + diphosphate. It catalyses the reaction [ThiS sulfur-carrier protein]-C-terminal Gly-Gly-AMP + S-sulfanyl-L-cysteinyl-[cysteine desulfurase] + AH2 = [ThiS sulfur-carrier protein]-C-terminal-Gly-aminoethanethioate + L-cysteinyl-[cysteine desulfurase] + A + AMP + 2 H(+). It functions in the pathway cofactor biosynthesis; thiamine diphosphate biosynthesis. Catalyzes the ATP-dependent transfer of a sulfur to tRNA to produce 4-thiouridine in position 8 of tRNAs, which functions as a near-UV photosensor. Also catalyzes the transfer of sulfur to the sulfur carrier protein ThiS, forming ThiS-thiocarboxylate. This is a step in the synthesis of thiazole, in the thiamine biosynthesis pathway. The sulfur is donated as persulfide by IscS. The protein is Probable tRNA sulfurtransferase of Metamycoplasma arthritidis (strain 158L3-1) (Mycoplasma arthritidis).